The following is a 43-amino-acid chain: Photosystem I reaction center subunit IX (43 aa).

A helical membrane pass occupies residues 7 to 27 (YLSVAPVLSTLWFGSLAGLLI).

This sequence belongs to the PsaJ family.

It is found in the plastid. Its subcellular location is the chloroplast thylakoid membrane. In terms of biological role, may help in the organization of the PsaE and PsaF subunits. This Aethionema cordifolium (Lebanon stonecress) protein is Photosystem I reaction center subunit IX.